The primary structure comprises 240 residues: Serine protease SplB (240 aa).

Residues 1–36 (MNKNVVIKSLAALTILTSVTGIGITLVEEVQQTAKA) form the signal peptide. Catalysis depends on charge relay system residues H75, D113, and S193.

Belongs to the peptidase S1B family.

It localises to the secreted. Its function is as follows. Serine protease that cleaves specifically after the sequence Trp-Glu-Leu-Gln. This chain is Serine protease SplB (splB), found in Staphylococcus aureus (strain MW2).